Consider the following 312-residue polypeptide: Malate dehydrogenase (312 aa).

NAD(+) contacts are provided by residues 7-13 (GAAGGIG) and Asp-34. Positions 81 and 87 each coordinate substrate. Residues Asn-94 and 117-119 (ITN) each bind NAD(+). Substrate contacts are provided by Asn-119 and Arg-153. His-177 serves as the catalytic Proton acceptor. An NAD(+)-binding site is contributed by Met-227.

The protein belongs to the LDH/MDH superfamily. MDH type 1 family. Homodimer.

It carries out the reaction (S)-malate + NAD(+) = oxaloacetate + NADH + H(+). In terms of biological role, catalyzes the reversible oxidation of malate to oxaloacetate. This is Malate dehydrogenase from Moritella marina (Vibrio marinus).